The primary structure comprises 121 residues: uncharacterized protein (121 aa).

3 helical membrane passes run 2 to 22 (VFVT…IYTI), 42 to 62 (FICI…YILF), and 89 to 109 (IFFA…LSIF).

Its subcellular location is the membrane. This is an uncharacterized protein from Saccharomyces cerevisiae (strain ATCC 204508 / S288c) (Baker's yeast).